The primary structure comprises 1011 residues: MMSDASDMLAAALEQMDGIIAGSKALEYSNGIFDCQSPTSPFMGSLRALHLVEDLRGLLEMMETDEKEGLRCQIPDSTAETLVEWLQSQMTNGHLPGNGDVYQERLARLENDKESLVLQVSVLTDQVEAQGEKIRDLEFCLEEHREKVNATEEMLQQELLSRTSLETQKLDLMAEISNLKLKLTAVEKDRLDYEDKFRDTEGLIQEINDLRLKVSEMDSERLQYEKKLKSTKSLMAKLSSMKIKVGQMQYEKQRMEQKWESLKDELASLKEQLEEKESEVKRLQEKLVCKMKGEGVEIVDRDIEVQKMKKAVESLMAANEEKDRKIEDLRQCLNRYKKMQDTVVLAQGKDGEYEELLNSSSISSLLDAQGFSDLEKSPSPTPVMGSPSCDPFNTSVPEEFHTTILQVSIPSLLPATVSMETSEKSKLTPKPETSFEENDGNIILGATVDTQLCDKLLTSSLQKSSSLGNLKKETSDGEKETIQKTSEDRAPAESRPFGTLPPRPPGQDTSMDDNPFGTRKVRSSFGRGFFKIKSNKRTASAPNLAETEKETAEHLDLAGASSRPKDSQRNSPFQIPPPSPDSKKKSRGIMKLFGKLRRSQSTTFNPDDMSEPEFKRGGTRATAGPRLGWSRDLGQSNSDLDMPFAKWTKEQVCNWLMEQGLGSYLNSGKHWIASGQTLLQASQQDLEKELGIKHSLHRKKLQLALQALGSEEETNHGKLDFNWVTRWLDDIGLPQYKTQFDEGRVDGRMLHYMTVDDLLSLKVVSVLHHLSIKRAIQVLRINNFEPNCLRRRPSDENTIAPSEVQKWTNHRVMEWLRSVDLAEYAPNLRGSGVHGGLMVLEPRFNVETMAQLLNIPPNKTLLRRHLATHFNLLIGAEAQHQKRDAMELPDYVLLTATAKVKPKKLAFSNFGNLRKKKQEDGEEYVCPMELGQASGSASKKGFKPGLDMRLYEEDDLDRLEQMEDSEGTVRQIGAFSEGINNLTHMLKEDDMFKDFAARSPSASITDEDSNV.

Ser-37 is subject to Phosphoserine. Thr-39 carries the post-translational modification Phosphothreonine. Ser-40 bears the Phosphoserine mark. Positions 156 to 405 form a coiled coil; it reads QQELLSRTSL…VPEEFHTTIL (250 aa). The residue at position 322 (Lys-322) is an N6-acetyllysine. Disordered regions lie at residues 420–439 and 463–634; these read ETSEKSKLTPKPETSFEEND and KSSS…RDLG. Phosphoserine occurs at positions 434 and 466. Residues 470 to 492 are compositionally biased toward basic and acidic residues; the sequence is LKKETSDGEKETIQKTSEDRAPA. Lys-471 is covalently cross-linked (Glycyl lysine isopeptide (Lys-Gly) (interchain with G-Cter in SUMO2)). Phosphoserine is present on residues Ser-523 and Ser-540. Positions 546-556 are enriched in basic and acidic residues; that stretch reads ETEKETAEHLD. Ser-579 carries the phosphoserine modification. A compositionally biased stretch (basic residues) spans 584-598; the sequence is KKSRGIMKLFGKLRR. Ser-601 and Ser-636 each carry phosphoserine. SAM domains lie at 647–711 and 719–782; these read WTKE…LGSE and LDFN…LRIN. The residue at position 794 (Ser-794) is a Phosphoserine. Positions 804–876 constitute an SAM 3 domain; the sequence is VQKWTNHRVM…ATHFNLLIGA (73 aa). 3 positions are modified to phosphoserine: Ser-999, Ser-1001, and Ser-1003. Thr-1005 bears the Phosphothreonine mark.

This sequence belongs to the liprin family. Liprin-beta subfamily. In terms of assembly, forms homodimers and heterodimers. Interacts with S100A4 in a Ca(2+)-dependent mode. Part of a cortical microtubule stabilization complex (CMSC) composed of KANK1, PPFIA1, PPFIBP1, ERC1/ELKS, PHLDB2/LL5beta, CLASPs, KIF21A and possibly additional interactors; within CMSCs KANK1 and PHLDB2/LL5beta seem to be the core components for recruiting microtubule-binding proteins KIF21A and CLASPs, whereas PPFIA1, PPFIBP1 and ERC1/ELKS serve as scaffolds for protein clustering. Interacts with KANK1 (via CC1 domain, residues 244-339). As to expression, widely expressed. Absent in liver.

The protein localises to the cytoplasm. Its subcellular location is the cell cortex. Functionally, may regulate the disassembly of focal adhesions. Did not bind receptor-like tyrosine phosphatases type 2A. The chain is Liprin-beta-1 (PPFIBP1) from Homo sapiens (Human).